The following is a 133-amino-acid chain: Large ribosomal subunit protein uL15 (133 aa).

The tract at residues 1–64 (MGLENLKPAK…QPLQRRLPKI (64 aa)) is disordered.

This sequence belongs to the universal ribosomal protein uL15 family. In terms of assembly, part of the 50S ribosomal subunit.

Its function is as follows. Binds to the 23S rRNA. The polypeptide is Large ribosomal subunit protein uL15 (Helicobacter pylori (strain Shi470)).